A 390-amino-acid chain; its full sequence is Nuclear receptor subfamily 2 group F member 6 (390 aa).

Over residues 1-15 the composition is skewed to gly residues; it reads MAMVTGGWGGPGGDT. Residues 1–50 form a disordered region; sequence MAMVTGGWGGPGGDTNGVDKAGGSYPRATEDDSASPPGATSDAEPGDEER. 2 positions are modified to phosphoserine: Ser35 and Ser41. Positions 54 to 129 form a DNA-binding region, nuclear receptor; that stretch reads QVDCVVCGDK…VGMRKEAVQP (76 aa). 2 consecutive NR C4-type zinc fingers follow at residues 57–77 and 93–117; these read CVVC…CEGC and CRSN…LKKC. One can recognise an NR LBD domain in the interval 157–380; that stretch reads PVSELIAQLL…TLIRDMLLSG (224 aa). Residues 314-390 are important for dimerization; that stretch reads LQEKAQVALT…STFNWPYGSG (77 aa).

This sequence belongs to the nuclear hormone receptor family. NR2 subfamily. Binds DNA as dimer; homodimer and heterodimer with NR2F2 and probably NR2F1. Interacts with THRB.

Its subcellular location is the nucleus. Transcription factor predominantly involved in transcriptional repression. Binds to promoter/enhancer response elements that contain the imperfect 5'-AGGTCA-3' direct or inverted repeats with various spacings which are also recognized by other nuclear hormone receptors. Involved in modulation of hormonal responses. Represses transcriptional activity of the lutropin-choriogonadotropic hormone receptor/LHCGR gene, the renin/REN gene and the oxytocin-neurophysin/OXT gene. Represses the triiodothyronine-dependent and -independent transcriptional activity of the thyroid hormone receptor gene in a cell type-specific manner. The corepressing function towards thyroid hormone receptor beta/THRB involves at least in part the inhibition of THRB binding to triiodothyronine response elements (TREs) by NR2F6. Inhibits NFATC transcription factor DNA binding and subsequently its transcriptional activity. Acts as transcriptional repressor of IL-17 expression in Th-17 differentiated CD4(+) T cells and may be involved in induction and/or maintenance of peripheral immunological tolerance and autoimmunity. Involved in development of forebrain circadian clock; is required early in the development of the locus coeruleus (LC). The polypeptide is Nuclear receptor subfamily 2 group F member 6 (Nr2f6) (Rattus norvegicus (Rat)).